Reading from the N-terminus, the 790-residue chain is Protein SEY1 (790 aa).

Over M1 to Q692 the chain is Cytoplasmic. The region spanning G55–Y284 is the GB1/RHD3-type G domain. GTP is bound at residue G65 to S72. Residues I693 to I713 form a helical membrane-spanning segment. The Lumenal portion of the chain corresponds to R714–P716. The helical transmembrane segment at L717–L737 threads the bilayer. At L738–M790 the chain is on the cytoplasmic side.

Belongs to the TRAFAC class dynamin-like GTPase superfamily. GB1/RHD3 GTPase family. RHD3 subfamily.

It localises to the endoplasmic reticulum membrane. Functionally, cooperates with the reticulon proteins and tubule-shaping DP1 family proteins to generate and maintain the structure of the tubular endoplasmic reticulum network. Has GTPase activity, which is required for its function in ER organization. This Candida dubliniensis (strain CD36 / ATCC MYA-646 / CBS 7987 / NCPF 3949 / NRRL Y-17841) (Yeast) protein is Protein SEY1.